We begin with the raw amino-acid sequence, 25 residues long: Small ribosomal subunit protein eS32 eS32z/eS32y/eS32x/eS32w/eS32v (25 aa).

The segment at 1–25 (MRAKWKKKRMRRLKRKRRKMRQRSK) is disordered.

It belongs to the eukaryotic ribosomal protein eS32 family. As to quaternary structure, component of the small ribosomal subunit (SSU).

The protein is Small ribosomal subunit protein eS32 eS32z/eS32y/eS32x/eS32w/eS32v (RPL41A) of Arabidopsis thaliana (Mouse-ear cress).